We begin with the raw amino-acid sequence, 134 residues long: uncharacterized protein (134 aa).

The segment at 1-30 (MGTLQGAALRSRERPSWPQETHGHRERTEE) is disordered. A compositionally biased stretch (basic and acidic residues) spans 10–30 (RSRERPSWPQETHGHRERTEE).

This is an uncharacterized protein from Homo sapiens (Human).